The sequence spans 490 residues: UDP-glucosyl transferase 73M2 (490 aa).

Histidine 20 functions as the Proton acceptor in the catalytic mechanism. Aspartate 124 functions as the Charge relay in the catalytic mechanism. Residues serine 297, tryptophan 353, alanine 354, histidine 371, asparagine 375, serine 376, glutamate 379, and tyrosine 393 each contribute to the UDP site.

It belongs to the UDP-glycosyltransferase family. As to expression, mainly expressed in flowers, flower buds and young leaves, and, to a lesser extent, in old leaves, stems and roots.

The protein operates within secondary metabolite biosynthesis; terpenoid biosynthesis. In terms of biological role, component of the oleanane-type triterpene saponins (e.g. saponarioside A and saponarioside B) biosynthetic pathway, leading to the production of natural products with detergent properties used as traditional sources of soap. A glycosyltransferase that mediates the conversion of QA-triFRX to QA-triFRXX via the elongation of the C-28 sugar chain with a D-xylose. The polypeptide is UDP-glucosyl transferase 73M2 (Saponaria officinalis (Common soapwort)).